Consider the following 688-residue polypeptide: DNA-directed RNA polymerase subunit beta' (688 aa).

Residues Cys-69, Cys-71, Cys-87, and Cys-90 each contribute to the Zn(2+) site. Mg(2+) is bound by residues Asp-497, Asp-499, and Asp-501.

This sequence belongs to the RNA polymerase beta' chain family. RpoC1 subfamily. In terms of assembly, in plastids the minimal PEP RNA polymerase catalytic core is composed of four subunits: alpha, beta, beta', and beta''. When a (nuclear-encoded) sigma factor is associated with the core the holoenzyme is formed, which can initiate transcription. Requires Mg(2+) as cofactor. Zn(2+) is required as a cofactor.

The protein resides in the plastid. It is found in the chloroplast. It catalyses the reaction RNA(n) + a ribonucleoside 5'-triphosphate = RNA(n+1) + diphosphate. Its function is as follows. DNA-dependent RNA polymerase catalyzes the transcription of DNA into RNA using the four ribonucleoside triphosphates as substrates. This Sinapis alba (White mustard) protein is DNA-directed RNA polymerase subunit beta'.